The sequence spans 263 residues: Fructose-bisphosphate aldolase class 1 (263 aa).

The active-site Schiff-base intermediate with dihydroxyacetone-P is the Lys177.

It belongs to the DeoC/FbaB aldolase family.

It catalyses the reaction beta-D-fructose 1,6-bisphosphate = D-glyceraldehyde 3-phosphate + dihydroxyacetone phosphate. In terms of biological role, has aldolase activity with fructose 1,6-bisphosphate. May play a role in the biosynthesis of aromatic amino acids (AroAA). This Halobacterium salinarum (strain ATCC 29341 / DSM 671 / R1) protein is Fructose-bisphosphate aldolase class 1 (fba1).